We begin with the raw amino-acid sequence, 478 residues long: 2-succinylbenzoate--CoA ligase (478 aa).

Belongs to the ATP-dependent AMP-binding enzyme family. MenE subfamily.

The enzyme catalyses 2-succinylbenzoate + ATP + CoA = 2-succinylbenzoyl-CoA + AMP + diphosphate. Its pathway is quinol/quinone metabolism; 1,4-dihydroxy-2-naphthoate biosynthesis; 1,4-dihydroxy-2-naphthoate from chorismate: step 5/7. It participates in quinol/quinone metabolism; menaquinone biosynthesis. Converts 2-succinylbenzoate (OSB) to 2-succinylbenzoyl-CoA (OSB-CoA). The sequence is that of 2-succinylbenzoate--CoA ligase from Bacillus licheniformis (strain ATCC 14580 / DSM 13 / JCM 2505 / CCUG 7422 / NBRC 12200 / NCIMB 9375 / NCTC 10341 / NRRL NRS-1264 / Gibson 46).